The sequence spans 428 residues: Histone-lysine N-methyltransferase SMYD3 (428 aa).

Met1 carries the N-acetylmethionine modification. The SET domain occupies 4 to 240; the sequence is LKVEKFTTAN…AGEELTICYL (237 aa). 14–16 is an S-adenosyl-L-methionine binding site; it reads RGN. Zn(2+) is bound by residues Cys49, Cys52, Cys62, Cys65, Cys71, Cys75, His83, and Cys87. The MYND-type zinc finger occupies 49-87; sequence CDRCLLGKEKLMRCSQCRIAKYCSAKCQKKAWPDHRREC. S-adenosyl-L-methionine-binding positions include Tyr124, Asn132, 205-206, Tyr239, and Phe259; that span reads NH. The C-terminal domain; essential for histone methyltransferase activity, nuclear localization and mediates interaction with HSP90AA1 stretch occupies residues 272–428; that stretch reads DADMLTGDEQ…EECDANIRAS (157 aa).

This sequence belongs to the class V-like SAM-binding methyltransferase superfamily. Histone-lysine methyltransferase family. In terms of assembly, interacts with HSPCA. Interacts with HELZ. Interacts with POLR2A; the interaction may be indirect and may be mediated by HELZ. Interacts with HSP90AA1; this interaction enhances SMYD3 histone-lysine N-methyltransferase.

The protein resides in the cytoplasm. It is found in the nucleus. The enzyme catalyses L-lysyl(4)-[histone H3] + 3 S-adenosyl-L-methionine = N(6),N(6),N(6)-trimethyl-L-lysyl(4)-[histone H3] + 3 S-adenosyl-L-homocysteine + 3 H(+). With respect to regulation, histone methyltransferase activity strongly stimulated by HSPCA. Its function is as follows. Histone methyltransferase. Specifically methylates 'Lys-4' of histone H3, inducing di- and tri-methylation, but not monomethylation. Also methylates 'Lys-5' of histone H4. Plays an important role in transcriptional activation as a member of an RNA polymerase complex. Binds DNA containing 5'-CCCTCC-3' or 5'-GAGGGG-3' sequences. The polypeptide is Histone-lysine N-methyltransferase SMYD3 (Smyd3) (Mus musculus (Mouse)).